A 367-amino-acid chain; its full sequence is Methylthioribose-1-phosphate isomerase (367 aa).

The Proton donor role is filled by Asp-250.

It belongs to the eIF-2B alpha/beta/delta subunits family. MtnA subfamily.

It localises to the cytoplasm. It is found in the nucleus. It catalyses the reaction 5-(methylsulfanyl)-alpha-D-ribose 1-phosphate = 5-(methylsulfanyl)-D-ribulose 1-phosphate. It participates in amino-acid biosynthesis; L-methionine biosynthesis via salvage pathway; L-methionine from S-methyl-5-thio-alpha-D-ribose 1-phosphate: step 1/6. Catalyzes the interconversion of methylthioribose-1-phosphate (MTR-1-P) into methylthioribulose-1-phosphate (MTRu-1-P). The chain is Methylthioribose-1-phosphate isomerase (IDI2) from Zea mays (Maize).